A 470-amino-acid chain; its full sequence is Acetyl-CoA decarbonylase/synthase complex subunit gamma 2 (470 aa).

Positions 1 to 60 (MKINSPLEAYKYLPQTNCGECGQPTCMAFASTLIDRSGKTTDCPPLIKEKKFAKKLAELD) constitute a 4Fe-4S domain. [4Fe-4S] cluster-binding residues include cysteine 18, cysteine 21, cysteine 26, and cysteine 43.

As to quaternary structure, heterodimer of delta and gamma chains. The ACDS complex is made up of alpha, epsilon, beta, gamma and delta chains with a probable stoichiometry of (alpha(2)epsilon(2))(4)-beta(8)-(gamma(1)delta(1))(8). The cofactor is corrinoid. It depends on [4Fe-4S] cluster as a cofactor.

The catalysed reaction is 5,6,7,8-tetrahydrosarcinapterin + methyl-Co(III)-[corrinoid Fe-S protein] = 5-methyltetrahydrosarcinapterin + Co(I)-[corrinoid Fe-S protein] + H(+). The protein operates within one-carbon metabolism; methanogenesis from acetate. Its function is as follows. Part of a complex that catalyzes the reversible cleavage of acetyl-CoA, allowing growth on acetate as sole source of carbon and energy. This Methanosarcina mazei (strain ATCC BAA-159 / DSM 3647 / Goe1 / Go1 / JCM 11833 / OCM 88) (Methanosarcina frisia) protein is Acetyl-CoA decarbonylase/synthase complex subunit gamma 2.